The sequence spans 279 residues: Threonylcarbamoyl-AMP synthase (279 aa).

A mitochondrion-targeting transit peptide spans 1–55; it reads MSPARRCRGMRAAVAASVGLSEGPAGSRSGRLFRPPSPAPAAPGARLLRLPGSGA. A disordered region spans residues 21 to 41; it reads SEGPAGSRSGRLFRPPSPAPA. Residue Ser60 is modified to Phosphoserine. Positions 67 to 257 constitute a YrdC-like domain; that stretch reads TEALRAAVAE…KFGIIRPGCA (191 aa).

This sequence belongs to the SUA5 family. Interacts with RSC1A1. Ubiquitously expressed.

The protein resides in the cytoplasm. It is found in the mitochondrion. Its subcellular location is the cell membrane. It catalyses the reaction L-threonine + hydrogencarbonate + ATP = L-threonylcarbamoyladenylate + diphosphate + H2O. Functionally, cytoplasmic and mitochondrial threonylcarbamoyl-AMP synthase required for the formation of a threonylcarbamoyl group on adenosine at position 37 (t(6)A37) in tRNAs that read codons beginning with adenine. Catalyzes the conversion of L-threonine, HCO(3)(-)/CO(2) and ATP to give threonylcarbamoyl-AMP (TC-AMP) as the acyladenylate intermediate, with the release of diphosphate. Participates in t(6)A37 formation in cytoplasmic and mitochondrial tRNAs. May regulate the activity of some transporters. The chain is Threonylcarbamoyl-AMP synthase from Homo sapiens (Human).